Consider the following 348-residue polypeptide: tRNA N6-adenosine threonylcarbamoyltransferase (348 aa).

Residues histidine 119 and histidine 123 each coordinate Fe cation. Residues leucine 141 to glycine 145, aspartate 174, glycine 187, aspartate 191, and asparagine 280 each bind substrate. Aspartate 310 is a binding site for Fe cation.

It belongs to the KAE1 / TsaD family. Fe(2+) is required as a cofactor.

Its subcellular location is the cytoplasm. It catalyses the reaction L-threonylcarbamoyladenylate + adenosine(37) in tRNA = N(6)-L-threonylcarbamoyladenosine(37) in tRNA + AMP + H(+). Functionally, required for the formation of a threonylcarbamoyl group on adenosine at position 37 (t(6)A37) in tRNAs that read codons beginning with adenine. Is involved in the transfer of the threonylcarbamoyl moiety of threonylcarbamoyl-AMP (TC-AMP) to the N6 group of A37, together with TsaE and TsaB. TsaD likely plays a direct catalytic role in this reaction. This is tRNA N6-adenosine threonylcarbamoyltransferase from Enterococcus faecalis (strain ATCC 700802 / V583).